The following is a 290-amino-acid chain: Arylamine N-acetyltransferase 1 (290 aa).

Residue Met-1 is modified to N-acetylmethionine. Ser-103 is a CoA binding site. Position 106 to 107 (106 to 107 (IH)) interacts with substrate. Tyr-208 provides a ligand contact to CoA.

Belongs to the arylamine N-acetyltransferase family.

Its subcellular location is the cytoplasm. It catalyses the reaction an arylamine + acetyl-CoA = an N-acetylarylamine + CoA. Participates in the detoxification of a plethora of hydrazine and arylamine drugs. In Bos taurus (Bovine), this protein is Arylamine N-acetyltransferase 1 (NAT1).